Here is a 309-residue protein sequence, read N- to C-terminus: Taste receptor type 2 member 31 (309 aa).

Topologically, residues 1 to 2 are extracellular; it reads MI. The helical transmembrane segment at 3 to 23 threads the bilayer; that stretch reads TFLPTIFSILVVVIFVIGNFG. Topologically, residues 24 to 55 are cytoplasmic; sequence NGFIALVNSIEWVKRQKISFADQILTALAVSR. The helical transmembrane segment at 56–76 threads the bilayer; sequence VGLLWALLLNWYSTVFNPAFY. Residues 77–100 lie on the Extracellular side of the membrane; it reads SVGVRTTVYDVWTVTGHFSNWLAT. The helical transmembrane segment at 101 to 121 threads the bilayer; sequence SLSIFYLLKIANFSNLIFLHL. The Cytoplasmic segment spans residues 122–126; sequence KRRVK. The chain crosses the membrane as a helical span at residues 127-147; it reads SVILVMLLGPLLFLACQLFVI. Topologically, residues 148 to 181 are extracellular; sequence NMKEILRTKEYEGNMTWKIKLRSAMYLSDATITT. An N-linked (GlcNAc...) asparagine glycan is attached at Asn-161. Residues 182 to 202 traverse the membrane as a helical segment; the sequence is LANLVPFTLTLLSFLLLICSL. The Cytoplasmic segment spans residues 203–229; sequence CKHLNKMQLHGKGSQDPSTKVHIKVLQ. Residues 230–250 traverse the membrane as a helical segment; it reads TVISFLLLCAIYFLSIMISVW. Residues 251–259 are Extracellular-facing; the sequence is SFGSLENKP. Residues 260–280 traverse the membrane as a helical segment; the sequence is VFMFCKAIRFSYPSIHPFILI. At 281–309 the chain is on the cytoplasmic side; that stretch reads WGNKKLKQTFLSVLRQVRYWVKGEKPSSP.

Belongs to the G-protein coupled receptor T2R family.

The protein localises to the membrane. In terms of biological role, receptor that may play a role in the perception of bitterness and is gustducin-linked. May play a role in sensing the chemical composition of the gastrointestinal content. The activity of this receptor may stimulate alpha gustducin, mediate PLC-beta-2 activation and lead to the gating of TRPM5. The polypeptide is Taste receptor type 2 member 31 (TAS2R31) (Pongo pygmaeus (Bornean orangutan)).